Here is a 327-residue protein sequence, read N- to C-terminus: Undecaprenyl-phosphate 4-deoxy-4-formamido-L-arabinose transferase (327 aa).

A run of 2 helical transmembrane segments spans residues 235–255 (LLSLVGSAIALLGFTFSVLLV) and 270–290 (VFTLFAVLFMFIGAQFVGMGL).

The protein belongs to the glycosyltransferase 2 family.

Its subcellular location is the cell inner membrane. It carries out the reaction UDP-4-deoxy-4-formamido-beta-L-arabinose + di-trans,octa-cis-undecaprenyl phosphate = 4-deoxy-4-formamido-alpha-L-arabinopyranosyl di-trans,octa-cis-undecaprenyl phosphate + UDP. It functions in the pathway glycolipid biosynthesis; 4-amino-4-deoxy-alpha-L-arabinose undecaprenyl phosphate biosynthesis; 4-amino-4-deoxy-alpha-L-arabinose undecaprenyl phosphate from UDP-4-deoxy-4-formamido-beta-L-arabinose and undecaprenyl phosphate: step 1/2. The protein operates within bacterial outer membrane biogenesis; lipopolysaccharide biosynthesis. Its function is as follows. Catalyzes the transfer of 4-deoxy-4-formamido-L-arabinose from UDP to undecaprenyl phosphate. The modified arabinose is attached to lipid A and is required for resistance to polymyxin and cationic antimicrobial peptides. This Yersinia pseudotuberculosis serotype IB (strain PB1/+) protein is Undecaprenyl-phosphate 4-deoxy-4-formamido-L-arabinose transferase.